The following is a 639-amino-acid chain: Uridine permease (639 aa).

Positions 1 to 37 (MPVSDSGFDNSSKTMKDDTIPTEDYEEITKESEMGDA) are disordered. Residues 1 to 162 (MPVSDSGFDN…LQLGLNWWQT (162 aa)) lie on the Cytoplasmic side of the membrane. Position 54 is a phosphothreonine (T54). S56 bears the Phosphoserine mark. Residues 163-180 (WICIWVGYTFVAFFLILG) traverse the membrane as a helical segment. Residues 181-200 (SKVGNNYHISFPISSRVSFG) are Extracellular-facing. Residues 201-225 (IYFSIWIVINRVVMACVWNSTLAYI) traverse the membrane as a helical segment. Residues 226–259 (GSQCVQLMLKAIFGTNLNTRIKDTIKNPNLTNFE) lie on the Cytoplasmic side of the membrane. Residues 260-276 (FMCFMVFWVACLPFLWF) traverse the membrane as a helical segment. Over 277 to 283 (PPDKLRH) the chain is Extracellular. A helical transmembrane segment spans residues 284-305 (IFALKSAITPFAAFGFLIWTLC). At 306 to 367 (KAKGHLALGS…KTYKSSVYSQ (62 aa)) the chain is on the cytoplasmic side. A helical transmembrane segment spans residues 368-392 (LIALPVCYAIISLIGILSVSAAYTL). The Extracellular portion of the chain corresponds to 393–416 (YGVNYWSPLDILNRYLDNYTSGNR). The helical transmembrane segment at 417 to 435 (AGVFLISFIFAFDQLGANL) threads the bilayer. The Cytoplasmic segment spans residues 436–460 (SGNSIPAGTDLTALLPKFINIRRGS). The chain crosses the membrane as a helical span at residues 461–477 (YICALISLAICPWDLLS). The Extracellular portion of the chain corresponds to 478-483 (SSSKFT). Residues 484 to 507 (TALAAYAVFLSAIAGVISADYFIV) form a helical membrane-spanning segment. The Cytoplasmic segment spans residues 508–537 (RKGYVNIFHCYTDKPGSYYMYNKYGTNWRA). A helical membrane pass occupies residues 538-562 (VVAYIFGIAPNFAGFLGSVGVSVPI). Topologically, residues 563-572 (GAMKVYYLNY) are extracellular. The chain crosses the membrane as a helical span at residues 573 to 590 (FVGYLLAALSYCILVYFY). The Cytoplasmic segment spans residues 591–639 (PIKGIPGDAKITDRKWLEEWVEVEEFGTEREAFEEYGGVSTGYEKIRYI). A Glycyl lysine isopeptide (Lys-Gly) (interchain with G-Cter in ubiquitin) cross-link involves residue K635.

It belongs to the purine-cytosine permease (2.A.39) family.

The protein resides in the membrane. High-affinity transport of uridine. In Saccharomyces cerevisiae (strain ATCC 204508 / S288c) (Baker's yeast), this protein is Uridine permease (FUI1).